We begin with the raw amino-acid sequence, 63 residues long: uncharacterized protein (63 aa).

A signal peptide spans 1–21 (MNRALILTFVLFFALFAISSA).

This is an uncharacterized protein from Dictyostelium discoideum (Social amoeba).